A 146-amino-acid polypeptide reads, in one-letter code: MLSQIYPQAQHPYSFELNKDMHISAAHFIPRESAGACSRVHGHTYTVNITVAGDELDDSGFLVNFSVLKKLVHGNYDHTLLNDHEDFSQDDRYSLPTTEVVAKTIYDNVQAYLDTLENKPTCVQVFVRETPTSYCVYRPKKGGLNG.

His27 is a binding site for Zn(2+). The Proton acceptor role is filled by Cys37. Residues His41 and His43 each contribute to the Zn(2+) site. Residues His78 and Glu129 each act as charge relay system in the active site.

The protein belongs to the PTPS family. QueD subfamily. Homotetramer. The cofactor is Zn(2+).

It catalyses the reaction 7,8-dihydroneopterin 3'-triphosphate + H2O = 6-carboxy-5,6,7,8-tetrahydropterin + triphosphate + acetaldehyde + 2 H(+). The protein operates within purine metabolism; 7-cyano-7-deazaguanine biosynthesis. Its function is as follows. Catalyzes the conversion of 7,8-dihydroneopterin triphosphate (H2NTP) to 6-carboxy-5,6,7,8-tetrahydropterin (CPH4) and acetaldehyde. The chain is 6-carboxy-5,6,7,8-tetrahydropterin synthase (queD) from Bacillus subtilis (strain 168).